The sequence spans 1024 residues: Beta-galactosidase (1024 aa).

Substrate-binding residues include N103 and D202. Residue D202 coordinates Na(+). Mg(2+) is bound by residues E417, H419, and E462. Residues E462 and 538 to 541 (EYAH) contribute to the substrate site. E462 acts as the Proton donor in catalysis. E538 functions as the Nucleophile in the catalytic mechanism. Position 598 (N598) interacts with Mg(2+). The Na(+) site is built by F602 and N605. Substrate is bound by residues N605 and W1000.

It belongs to the glycosyl hydrolase 2 family. As to quaternary structure, homotetramer. The cofactor is Mg(2+). It depends on Na(+) as a cofactor.

It carries out the reaction Hydrolysis of terminal non-reducing beta-D-galactose residues in beta-D-galactosides.. This chain is Beta-galactosidase, found in Escherichia coli O1:K1 / APEC.